A 198-amino-acid chain; its full sequence is Peroxiredoxin-2 (198 aa).

The residue at position 2 (A2) is an N-acetylalanine. Residues A6–Y164 enclose the Thioredoxin domain. C51 functions as the Cysteine sulfenic acid (-SOH) intermediate in the catalytic mechanism. S112 is subject to Phosphoserine. Phosphothreonine is present on T182. K196 is subject to N6-acetyllysine.

Belongs to the peroxiredoxin family. AhpC/Prx1 subfamily. In terms of assembly, homodimer; disulfide-linked, upon oxidation. 5 homodimers assemble to form a ring-like decamer. Interacts with TIPIN. The enzyme can be inactivated by further oxidation of the cysteine sulfenic acid (C(P)-SOH) to sulphinic acid (C(P)-SO2H) instead of its condensation to a disulfide bond. It can be reactivated by forming a transient disulfide bond with sulfiredoxin SRXN1, which reduces the cysteine sulfinic acid in an ATP- and Mg-dependent manner. In terms of processing, acetylation increases resistance to transition to high molecular-mass complexes. Deacetylated by HDAC6 which decreases reducing activity.

It localises to the cytoplasm. It catalyses the reaction a hydroperoxide + [thioredoxin]-dithiol = an alcohol + [thioredoxin]-disulfide + H2O. In terms of biological role, thiol-specific peroxidase that catalyzes the reduction of hydrogen peroxide and organic hydroperoxides to water and alcohols, respectively. Plays a role in cell protection against oxidative stress by detoxifying peroxides and as sensor of hydrogen peroxide-mediated signaling events. Might participate in the signaling cascades of growth factors and tumor necrosis factor-alpha by regulating the intracellular concentrations of H(2)O(2). This Macaca fascicularis (Crab-eating macaque) protein is Peroxiredoxin-2 (PRDX2).